The following is an 828-amino-acid chain: Periplasmic nitrate reductase (828 aa).

Positions Met-1 to Ala-31 form a signal peptide, tat-type signal. Residues Ile-39–Asp-95 enclose the 4Fe-4S Mo/W bis-MGD-type domain. [4Fe-4S] cluster contacts are provided by Cys-46, Cys-49, Cys-53, and Cys-81. Residues Lys-83, Gln-150, Asn-175, Cys-179, Trp-212 to Met-219, Ser-243 to His-247, Gln-262 to Asp-264, Met-372, Gln-376, Asn-482, Ser-508 to Asp-509, Lys-531, Asp-558, and Thr-718 to Thr-727 each bind Mo-bis(molybdopterin guanine dinucleotide). Phe-794 contributes to the substrate binding site. Residues Asn-802 and Lys-819 each contribute to the Mo-bis(molybdopterin guanine dinucleotide) site.

This sequence belongs to the prokaryotic molybdopterin-containing oxidoreductase family. NasA/NapA/NarB subfamily. As to quaternary structure, component of the periplasmic nitrate reductase NapAB complex composed of NapA and NapB. The cofactor is [4Fe-4S] cluster. Mo-bis(molybdopterin guanine dinucleotide) is required as a cofactor. Predicted to be exported by the Tat system. The position of the signal peptide cleavage has not been experimentally proven.

It localises to the periplasm. It carries out the reaction 2 Fe(II)-[cytochrome] + nitrate + 2 H(+) = 2 Fe(III)-[cytochrome] + nitrite + H2O. In terms of biological role, catalytic subunit of the periplasmic nitrate reductase complex NapAB. Receives electrons from NapB and catalyzes the reduction of nitrate to nitrite. The sequence is that of Periplasmic nitrate reductase from Pectobacterium carotovorum subsp. carotovorum (strain PC1).